Consider the following 496-residue polypeptide: tRNA-2-methylthio-N(6)-dimethylallyladenosine synthase (496 aa).

The MTTase N-terminal domain occupies 43-160 (KKVFVTTQGC…LPELYDQSHQ (118 aa)). Residues cysteine 52, cysteine 89, cysteine 123, cysteine 204, cysteine 208, and cysteine 211 each coordinate [4Fe-4S] cluster. In terms of domain architecture, Radical SAM core spans 190 to 422 (RVEGFKAFVS…QKVIIDSTLA (233 aa)). In terms of domain architecture, TRAM spans 425–493 (HEMVGTTTRV…PHMVKGEIEA (69 aa)).

Belongs to the methylthiotransferase family. MiaB subfamily. In terms of assembly, monomer. It depends on [4Fe-4S] cluster as a cofactor.

It is found in the cytoplasm. The catalysed reaction is N(6)-dimethylallyladenosine(37) in tRNA + (sulfur carrier)-SH + AH2 + 2 S-adenosyl-L-methionine = 2-methylsulfanyl-N(6)-dimethylallyladenosine(37) in tRNA + (sulfur carrier)-H + 5'-deoxyadenosine + L-methionine + A + S-adenosyl-L-homocysteine + 2 H(+). Functionally, catalyzes the methylthiolation of N6-(dimethylallyl)adenosine (i(6)A), leading to the formation of 2-methylthio-N6-(dimethylallyl)adenosine (ms(2)i(6)A) at position 37 in tRNAs that read codons beginning with uridine. This is tRNA-2-methylthio-N(6)-dimethylallyladenosine synthase from Psychrobacter arcticus (strain DSM 17307 / VKM B-2377 / 273-4).